The sequence spans 95 residues: Small ribosomal subunit protein uS19 (95 aa).

A disordered region spans residues 73–95 (EFSPTRTYRGHGADKNAKGSKKK).

Belongs to the universal ribosomal protein uS19 family.

Its function is as follows. Protein S19 forms a complex with S13 that binds strongly to the 16S ribosomal RNA. The polypeptide is Small ribosomal subunit protein uS19 (Deinococcus radiodurans (strain ATCC 13939 / DSM 20539 / JCM 16871 / CCUG 27074 / LMG 4051 / NBRC 15346 / NCIMB 9279 / VKM B-1422 / R1)).